A 225-amino-acid chain; its full sequence is UPF0758 protein Shew185_0376 (225 aa).

Positions 102–224 constitute an MPN domain; sequence VLTNPDLTRD…IVSFAERGWI (123 aa). Zn(2+) contacts are provided by His173, His175, and Asp186. Positions 173-186 match the JAMM motif motif; sequence HNHPSGNAEPSQAD.

It belongs to the UPF0758 family.

The sequence is that of UPF0758 protein Shew185_0376 from Shewanella baltica (strain OS185).